The primary structure comprises 342 residues: P21 prophage-derived major head protein (342 aa).

Belongs to the lambda phage major capsid protein family.

The protein is P21 prophage-derived major head protein of Escherichia coli O6:H1 (strain CFT073 / ATCC 700928 / UPEC).